We begin with the raw amino-acid sequence, 122 residues long: Protein MGF 100-1R (122 aa).

This sequence belongs to the asfivirus MGF 100 family.

In terms of biological role, plays a role in virus cell tropism, and may be required for efficient virus replication in macrophages. This chain is Protein MGF 100-1R, found in Ornithodoros (relapsing fever ticks).